Reading from the N-terminus, the 556-residue chain is 2-succinyl-5-enolpyruvyl-6-hydroxy-3-cyclohexene-1-carboxylate synthase (556 aa).

It belongs to the TPP enzyme family. MenD subfamily. Homodimer. Mg(2+) is required as a cofactor. The cofactor is Mn(2+). Thiamine diphosphate serves as cofactor.

It carries out the reaction isochorismate + 2-oxoglutarate + H(+) = 5-enolpyruvoyl-6-hydroxy-2-succinyl-cyclohex-3-ene-1-carboxylate + CO2. The protein operates within quinol/quinone metabolism; 1,4-dihydroxy-2-naphthoate biosynthesis; 1,4-dihydroxy-2-naphthoate from chorismate: step 2/7. It functions in the pathway quinol/quinone metabolism; menaquinone biosynthesis. In terms of biological role, catalyzes the thiamine diphosphate-dependent decarboxylation of 2-oxoglutarate and the subsequent addition of the resulting succinic semialdehyde-thiamine pyrophosphate anion to isochorismate to yield 2-succinyl-5-enolpyruvyl-6-hydroxy-3-cyclohexene-1-carboxylate (SEPHCHC). This chain is 2-succinyl-5-enolpyruvyl-6-hydroxy-3-cyclohexene-1-carboxylate synthase, found in Escherichia coli O45:K1 (strain S88 / ExPEC).